Reading from the N-terminus, the 960-residue chain is Importin alpha re-exporter (960 aa).

HEAT repeat units follow at residues 1–33 (MSDL…LETQ), 34–73 (DGFG…VDEN), 74–120 (GNHL…FPDR), 121–157 (WPTL…WRPL), 158–220 (FRSD…NCQD), 221–278 (IPEF…TRYE), 279–323 (DVFG…TRIP), 324–392 (KYFE…KEKN), 393–445 (EVLV…GVSS), 446–489 (TNNL…RNQL), 490–528 (TKAQ…TIRE), 529–586 (SNTS…TSED), 587–630 (SIQP…LNYT), 631–674 (QRQN…QSAT), 675–716 (IPES…SSIF), 717–751 (PDLV…LLID), 752–794 (MNRL…NKLG), and 795–826 (SDFL…PTIG). The Importin N-terminal domain occupies 23 to 96 (SERNLRQLET…KKEIVPLMIS (74 aa)). The Nuclear localization signal signature appears at 366 to 381 (RRDLEGSDTDTRRRAC). An HEAT 19; with insert repeat occupies 827–928 (NLLDRKIALI…RLYVAEALNK (102 aa)). One copy of the HEAT 20 repeat lies at 929–960 (YNAISGNTFLNTILPQLTQENQVKLNQLLVGN).

This sequence belongs to the XPO2/CSE1 family. In terms of assembly, binds with high affinity to SRP1 only in the presence of RanGTP. The complex is dissociated by the RanGTP-binding protein YRB1.

The protein resides in the cytoplasm. It localises to the nucleus. Functionally, export receptor for importin alpha (SRP1). Mediates importin-alpha re-export from the nucleus to the cytoplasm after import substrates have been released into the nucleoplasm. This is Importin alpha re-exporter (CSE1) from Saccharomyces cerevisiae (strain ATCC 204508 / S288c) (Baker's yeast).